The sequence spans 485 residues: E3 ubiquitin-protein ligase RNF14 (485 aa).

The 127-residue stretch at 11-137 folds into the RWD domain; sequence DELLALASIY…QFLKEETLTY (127 aa). The D-box signature appears at 37 to 45; that stretch reads RIYLDLPQN. Residues 217 to 458 are TRIAD supradomain; that stretch reads KLFLCSICFC…DSESPCFNRL (242 aa). Residues cysteine 221, cysteine 224, cysteine 239, histidine 241, cysteine 244, cysteine 247, cysteine 266, cysteine 271, cysteine 310, cysteine 315, cysteine 330, cysteine 333, cysteine 338, cysteine 341, and histidine 346 each coordinate Zn(2+). Residues 221 to 271 form an RING-type 1 zinc finger; sequence CSICFCEKLGSDCMYFLECKHVYCKACLKDYFEIQIKDGQVKCLNCPEPQC. An IBR-type zinc finger spans residues 290–351; it reads ARYDRLLLQS…RLTYHGLSPC (62 aa). Serine 349 is subject to Phosphoserine. Zn(2+) is bound by residues cysteine 351, cysteine 405, and cysteine 408. The segment at 405-434 adopts an RING-type 2; atypical zinc-finger fold; sequence CPCCGTPIQKLDGCNKMTCTGCMQYFCWIC. The active site involves cysteine 418. Residues cysteine 423, cysteine 426, cysteine 431, cysteine 434, histidine 446, and cysteine 454 each contribute to the Zn(2+) site.

This sequence belongs to the RBR family. RNF14 subfamily. As to quaternary structure, interacts with GCN1; interaction takes place in response to ribosome collisions and is required for ubiquitination of EEF1A1/eEF1A. Interacts with the ubiquitin-conjugating enzymes UBE2E1 and UBE2E2. Interacts with AR/androgen receptor. Interacts with TCF7/TCF1, TCF7L1/TCF3 and TCF7L2/TCF4; promoting Wnt signaling. Post-translationally, RING-type zinc finger-dependent and UBE2E2-dependent autoubiquitination.

It localises to the cytoplasm. It is found in the nucleus. It carries out the reaction [E2 ubiquitin-conjugating enzyme]-S-ubiquitinyl-L-cysteine + [acceptor protein]-L-lysine = [E2 ubiquitin-conjugating enzyme]-L-cysteine + [acceptor protein]-N(6)-ubiquitinyl-L-lysine.. It participates in protein modification; protein ubiquitination. Its function is as follows. E3 ubiquitin-protein ligase that plays a key role in the RNF14-RNF25 translation quality control pathway, a pathway that takes place when a ribosome has stalled during translation, and which promotes ubiquitination and degradation of translation factors on stalled ribosomes. Recruited to stalled ribosomes by the ribosome collision sensor GCN1 and mediates 'Lys-6'-linked ubiquitination of target proteins, leading to their degradation. Mediates ubiquitination of EEF1A1/eEF1A and ETF1/eRF1 translation factors on stalled ribosomes, leading to their degradation. Also catalyzes ubiquitination of ribosomal proteins RPL0, RPL1, RPL12, RPS13 and RPS17. Specifically required to resolve RNA-protein cross-links caused by reactive aldehydes, which trigger translation stress by stalling ribosomes: acts by catalying 'Lys-6'-linked ubiquitination of RNA-protein cross-links, leading to their removal by the ATP-dependent unfoldase VCP and subsequent degradation by the proteasome. Independently of its function in the response to stalled ribosomes, acts as a regulator of transcription in Wnt signaling via its interaction with TCF transcription factors (TCF7/TCF1, TCF7L1/TCF3 and TCF7L2/TCF4). May also play a role as a coactivator for androgen- and, to a lesser extent, progesterone-dependent transcription. In Mus musculus (Mouse), this protein is E3 ubiquitin-protein ligase RNF14.